The sequence spans 340 residues: Protein RecA (340 aa).

65–72 (GPESGGKT) provides a ligand contact to ATP.

This sequence belongs to the RecA family.

The protein resides in the cytoplasm. Its function is as follows. Can catalyze the hydrolysis of ATP in the presence of single-stranded DNA, the ATP-dependent uptake of single-stranded DNA by duplex DNA, and the ATP-dependent hybridization of homologous single-stranded DNAs. It interacts with LexA causing its activation and leading to its autocatalytic cleavage. The polypeptide is Protein RecA (Thermus aquaticus).